The sequence spans 363 residues: UDP-N-acetylglucosamine--N-acetylmuramyl-(pentapeptide) pyrophosphoryl-undecaprenol N-acetylglucosamine transferase (363 aa).

UDP-N-acetyl-alpha-D-glucosamine-binding positions include 10 to 12, N124, S195, I250, and Q295; that span reads TGG.

Belongs to the glycosyltransferase 28 family. MurG subfamily.

It is found in the cell membrane. The catalysed reaction is di-trans,octa-cis-undecaprenyl diphospho-N-acetyl-alpha-D-muramoyl-L-alanyl-D-glutamyl-meso-2,6-diaminopimeloyl-D-alanyl-D-alanine + UDP-N-acetyl-alpha-D-glucosamine = di-trans,octa-cis-undecaprenyl diphospho-[N-acetyl-alpha-D-glucosaminyl-(1-&gt;4)]-N-acetyl-alpha-D-muramoyl-L-alanyl-D-glutamyl-meso-2,6-diaminopimeloyl-D-alanyl-D-alanine + UDP + H(+). Its pathway is cell wall biogenesis; peptidoglycan biosynthesis. Cell wall formation. Catalyzes the transfer of a GlcNAc subunit on undecaprenyl-pyrophosphoryl-MurNAc-pentapeptide (lipid intermediate I) to form undecaprenyl-pyrophosphoryl-MurNAc-(pentapeptide)GlcNAc (lipid intermediate II). In Listeria monocytogenes serotype 4a (strain HCC23), this protein is UDP-N-acetylglucosamine--N-acetylmuramyl-(pentapeptide) pyrophosphoryl-undecaprenol N-acetylglucosamine transferase.